A 688-amino-acid polypeptide reads, in one-letter code: Elongation factor G (688 aa).

Residues Glu8 to Leu282 enclose the tr-type G domain. GTP is bound by residues Ala17–Thr24, Asp81–His85, and Asn135–Asp138. The tract at residues Leu282 to Asn305 is disordered.

This sequence belongs to the TRAFAC class translation factor GTPase superfamily. Classic translation factor GTPase family. EF-G/EF-2 subfamily.

It localises to the cytoplasm. In terms of biological role, catalyzes the GTP-dependent ribosomal translocation step during translation elongation. During this step, the ribosome changes from the pre-translocational (PRE) to the post-translocational (POST) state as the newly formed A-site-bound peptidyl-tRNA and P-site-bound deacylated tRNA move to the P and E sites, respectively. Catalyzes the coordinated movement of the two tRNA molecules, the mRNA and conformational changes in the ribosome. This Clostridium kluyveri (strain NBRC 12016) protein is Elongation factor G.